A 276-amino-acid chain; its full sequence is Undecaprenyl-diphosphatase (276 aa).

A run of 5 helical transmembrane segments spans residues 84–104 (YRLGWYVIIGTIPICVLGLLF), 115–135 (LWVVATALVVFSGVIALAEYL), 188–208 (FGFLLAIPAVFASGLFSLPDA), 222–242 (QLLVATLIAFVVGLAAVSWFL), and 250–270 (MYWFVGYRVVVGVVVLILLAT).

Belongs to the UppP family.

The protein localises to the cell membrane. The enzyme catalyses di-trans,octa-cis-undecaprenyl diphosphate + H2O = di-trans,octa-cis-undecaprenyl phosphate + phosphate + H(+). Functionally, catalyzes the dephosphorylation of undecaprenyl diphosphate (UPP). Confers resistance to bacitracin. In Mycobacterium ulcerans (strain Agy99), this protein is Undecaprenyl-diphosphatase.